Here is a 249-residue protein sequence, read N- to C-terminus: Cytokine-inducible SH2-containing protein (249 aa).

The disordered stretch occupies residues Ala41–Asp64. Residues Trp84–Tyr165 form the SH2 domain. Residues Lys200 to Gln248 form the SOCS box domain.

Its pathway is protein modification; protein ubiquitination. In terms of biological role, SOCS family proteins form part of a classical negative feedback system that regulates cytokine signal transduction. CIS is involved in the negative regulation of cytokines that signal through the JAK-STAT5 pathway such as erythropoietin, prolactin and interleukin 3 (IL3) receptor. Inhibits STAT5 trans-activation by suppressing its tyrosine phosphorylation. May be a substrate-recognition component of a SCF-like ECS (Elongin BC-CUL2/5-SOCS-box protein) E3 ubiquitin-protein ligase complex which mediates the ubiquitination and subsequent proteasomal degradation of target proteins. The protein is Cytokine-inducible SH2-containing protein (CISH) of Gallus gallus (Chicken).